The primary structure comprises 376 residues: GTPase Obg (376 aa).

The 160-residue stretch at Ala2–Val161 folds into the Obg domain. The region spanning Ala162–Asp328 is the OBG-type G domain. Residues Gly168 to Ser175, Phe193 to Ile197, Asp215 to Gly218, Thr282 to Asp285, and Ser309 to His311 each bind GTP. Ser175 and Thr195 together coordinate Mg(2+).

It belongs to the TRAFAC class OBG-HflX-like GTPase superfamily. OBG GTPase family. In terms of assembly, monomer. Requires Mg(2+) as cofactor.

It localises to the cytoplasm. An essential GTPase which binds GTP, GDP and possibly (p)ppGpp with moderate affinity, with high nucleotide exchange rates and a fairly low GTP hydrolysis rate. Plays a role in control of the cell cycle, stress response, ribosome biogenesis and in those bacteria that undergo differentiation, in morphogenesis control. This Treponema pallidum (strain Nichols) protein is GTPase Obg.